Consider the following 441-residue polypeptide: Methionine gamma-lyase (441 aa).

Residues 1–25 (MAHFLETQEPLVFSGKKRNDRDDED) are disordered. Residue K248 is modified to N6-(pyridoxal phosphate)lysine.

Belongs to the trans-sulfuration enzymes family. In terms of assembly, homotetramer. Requires pyridoxal 5'-phosphate as cofactor. As to expression, expressed in roots, stems, siliques, leaves, flowers and seeds after imbibition (at protein level). Transcripts accumulate in dry mature seeds, but at protein level, only present upon imbibition.

Its subcellular location is the cytoplasm. The enzyme catalyses L-methionine + H2O = methanethiol + 2-oxobutanoate + NH4(+). In terms of biological role, catalyzes the degradation of L-methionine to alpha-ketobutyrate, methanethiol and ammonia. Exhibits a high activity toward L-methionine, L-ethionine, L-homocysteine and seleno-L-methionine, but not L-cysteine. Involved in an alternative cysteine biosynthesis pathway to the reverse trans-sulfuration pathway (methionine-&gt;homocysteine-&gt;cystathionine-&gt;cysteine) in which methanethiol is an intermediate. Also mediates an alternative isoleucine biosynthesis pathway in which 2-ketobutyrate is an intermediate. This is Methionine gamma-lyase (MGL) from Arabidopsis thaliana (Mouse-ear cress).